The following is a 306-amino-acid chain: Lipoyl synthase (306 aa).

The [4Fe-4S] cluster site is built by Cys-52, Cys-57, Cys-63, Cys-78, Cys-82, Cys-85, and Ser-289. The Radical SAM core domain maps to 64–278 (WNRKTATYML…KETAYKIGFK (215 aa)).

The protein belongs to the radical SAM superfamily. Lipoyl synthase family. [4Fe-4S] cluster serves as cofactor.

The protein localises to the cytoplasm. It catalyses the reaction [[Fe-S] cluster scaffold protein carrying a second [4Fe-4S](2+) cluster] + N(6)-octanoyl-L-lysyl-[protein] + 2 oxidized [2Fe-2S]-[ferredoxin] + 2 S-adenosyl-L-methionine + 4 H(+) = [[Fe-S] cluster scaffold protein] + N(6)-[(R)-dihydrolipoyl]-L-lysyl-[protein] + 4 Fe(3+) + 2 hydrogen sulfide + 2 5'-deoxyadenosine + 2 L-methionine + 2 reduced [2Fe-2S]-[ferredoxin]. The protein operates within protein modification; protein lipoylation via endogenous pathway; protein N(6)-(lipoyl)lysine from octanoyl-[acyl-carrier-protein]: step 2/2. Catalyzes the radical-mediated insertion of two sulfur atoms into the C-6 and C-8 positions of the octanoyl moiety bound to the lipoyl domains of lipoate-dependent enzymes, thereby converting the octanoylated domains into lipoylated derivatives. This chain is Lipoyl synthase, found in Leptospira biflexa serovar Patoc (strain Patoc 1 / Ames).